We begin with the raw amino-acid sequence, 112 residues long: Large ribosomal subunit protein uL24 (112 aa).

The disordered stretch occupies residues 92–112; the sequence is ERDGKQKTVRVRVSKSTGKDL.

Belongs to the universal ribosomal protein uL24 family. Part of the 50S ribosomal subunit.

Its function is as follows. One of two assembly initiator proteins, it binds directly to the 5'-end of the 23S rRNA, where it nucleates assembly of the 50S subunit. In terms of biological role, one of the proteins that surrounds the polypeptide exit tunnel on the outside of the subunit. In Kocuria rhizophila (strain ATCC 9341 / DSM 348 / NBRC 103217 / DC2201), this protein is Large ribosomal subunit protein uL24.